A 767-amino-acid polypeptide reads, in one-letter code: Two-component response regulator-like PRR73 (767 aa).

Residues 1 to 64 (MGSACEAGTD…EPQQTDEQKE (64 aa)) form a disordered region. A Response regulatory domain is found at 82 to 200 (RVLLVENDDS…ELKNLWQHVW (119 aa)). A compositionally biased stretch (low complexity) spans 205-214 (SSSGSGSESG). Disordered regions lie at residues 205–272 (SSSG…QSSW), 312–388 (RWLP…NEPT), 476–546 (ASNQ…RGKV), 646–701 (ANYS…SGSG), and 727–767 (NFGK…DEDR). The span at 238-252 (DNEDDDDNDEDDDDL) shows a compositional bias: acidic residues. Composition is skewed to polar residues over residues 263–272 (DNGSGTQSSW), 343–361 (RNSSMEYQSSPREMSVNPT), and 488–497 (CSPQDNSSEA). A compositionally biased stretch (low complexity) spans 518–531 (GSNGSSNNNDMGSS). Over residues 532-543 (TKNAITKPSSNR) the composition is skewed to polar residues. Gly residues predominate over residues 689–700 (GAGGGNGSGSGS). The 43-residue stretch at 712–754 (REAALNKFRQKRKVRNFGKKVRYQSRKRLAEQRPRIRGQFVRQ) folds into the CCT domain. Positions 727 to 738 (NFGKKVRYQSRK) are enriched in basic residues.

The protein belongs to the ARR-like family.

It localises to the nucleus. Controls photoperiodic flowering response. Seems to be one of the component of the circadian clock. Expression of several members of the ARR-like family is controlled by circadian rhythm. The particular coordinated sequential expression of PRR73, PRR37, PRR95, PRR59 and PPR1 result to circadian waves that may be at the basis of the endogenous circadian clock. The protein is Two-component response regulator-like PRR73 (PRR73) of Oryza sativa subsp. japonica (Rice).